Here is a 41-residue protein sequence, read N- to C-terminus: Ornatin-A2 (41 aa).

The Cell attachment site signature appears at 33 to 35 (RGD).

Belongs to the ornatin family.

Its subcellular location is the secreted. Functionally, potent inhibitor of fibrinogen interaction with platelet receptors expressed on glycoprotein IIb-IIIa complex. May prevent blood from clotting during either feeding and/or storage of ingested blood. This chain is Ornatin-A2, found in Placobdella ornata (Turtle leech).